We begin with the raw amino-acid sequence, 475 residues long: Ribulose bisphosphate carboxylase large chain (475 aa).

The propeptide occupies 1–2 (MS). P3 bears the N-acetylproline mark. At K14 the chain carries N6,N6,N6-trimethyllysine. Positions 123 and 173 each coordinate substrate. K175 serves as the catalytic Proton acceptor. K177 is a substrate binding site. Mg(2+) is bound by residues K201, D203, and E204. An N6-carboxylysine modification is found at K201. The active-site Proton acceptor is H294. Substrate contacts are provided by R295, H327, and S379.

The protein belongs to the RuBisCO large chain family. Type I subfamily. In terms of assembly, heterohexadecamer of 8 large chains and 8 small chains. Mg(2+) serves as cofactor.

It localises to the plastid. Its subcellular location is the chloroplast. The catalysed reaction is 2 (2R)-3-phosphoglycerate + 2 H(+) = D-ribulose 1,5-bisphosphate + CO2 + H2O. It carries out the reaction D-ribulose 1,5-bisphosphate + O2 = 2-phosphoglycolate + (2R)-3-phosphoglycerate + 2 H(+). RuBisCO catalyzes two reactions: the carboxylation of D-ribulose 1,5-bisphosphate, the primary event in carbon dioxide fixation, as well as the oxidative fragmentation of the pentose substrate in the photorespiration process. Both reactions occur simultaneously and in competition at the same active site. The polypeptide is Ribulose bisphosphate carboxylase large chain (Huperzia lucidula (Shining clubmoss)).